The following is a 315-amino-acid chain: 4-hydroxy-3-methylbut-2-enyl diphosphate reductase (315 aa).

Cys-12 provides a ligand contact to [4Fe-4S] cluster. His-43 and His-81 together coordinate (2E)-4-hydroxy-3-methylbut-2-enyl diphosphate. The dimethylallyl diphosphate site is built by His-43 and His-81. Isopentenyl diphosphate is bound by residues His-43 and His-81. [4Fe-4S] cluster is bound at residue Cys-103. Residue His-131 coordinates (2E)-4-hydroxy-3-methylbut-2-enyl diphosphate. His-131 is a binding site for dimethylallyl diphosphate. His-131 contacts isopentenyl diphosphate. Glu-133 acts as the Proton donor in catalysis. Thr-170 provides a ligand contact to (2E)-4-hydroxy-3-methylbut-2-enyl diphosphate. Cys-198 lines the [4Fe-4S] cluster pocket. Positions 226, 228, and 271 each coordinate (2E)-4-hydroxy-3-methylbut-2-enyl diphosphate. Dimethylallyl diphosphate is bound by residues Ser-226, Asn-228, and Ser-271. Positions 226, 228, and 271 each coordinate isopentenyl diphosphate.

This sequence belongs to the IspH family. The cofactor is [4Fe-4S] cluster.

It carries out the reaction isopentenyl diphosphate + 2 oxidized [2Fe-2S]-[ferredoxin] + H2O = (2E)-4-hydroxy-3-methylbut-2-enyl diphosphate + 2 reduced [2Fe-2S]-[ferredoxin] + 2 H(+). The enzyme catalyses dimethylallyl diphosphate + 2 oxidized [2Fe-2S]-[ferredoxin] + H2O = (2E)-4-hydroxy-3-methylbut-2-enyl diphosphate + 2 reduced [2Fe-2S]-[ferredoxin] + 2 H(+). It functions in the pathway isoprenoid biosynthesis; dimethylallyl diphosphate biosynthesis; dimethylallyl diphosphate from (2E)-4-hydroxy-3-methylbutenyl diphosphate: step 1/1. The protein operates within isoprenoid biosynthesis; isopentenyl diphosphate biosynthesis via DXP pathway; isopentenyl diphosphate from 1-deoxy-D-xylulose 5-phosphate: step 6/6. In terms of biological role, catalyzes the conversion of 1-hydroxy-2-methyl-2-(E)-butenyl 4-diphosphate (HMBPP) into a mixture of isopentenyl diphosphate (IPP) and dimethylallyl diphosphate (DMAPP). Acts in the terminal step of the DOXP/MEP pathway for isoprenoid precursor biosynthesis. This is 4-hydroxy-3-methylbut-2-enyl diphosphate reductase from Bacillus cytotoxicus (strain DSM 22905 / CIP 110041 / 391-98 / NVH 391-98).